The following is a 395-amino-acid chain: F-box/LRR-repeat protein 12 (395 aa).

The 49-residue stretch at 13–61 (TSIIHLPDDCLSFIFQRLDSVADHDSFGLTCHRWLNIQNISRRSLQFQC) folds into the F-box domain. LRR repeat units follow at residues 75–100 (NPDV…SLSG), 101–126 (CTVL…YLDC), 127–152 (CFGI…SLYR), 154–177 (NISD…NLSY), 178–203 (CPLV…KISN), 226–250 (SCQL…NISG), 252–278 (SCYI…NLRM), 279–304 (CRTV…NLAL), 305–330 (CHEV…HVNR), and 331–356 (CRNL…YMNG).

The polypeptide is F-box/LRR-repeat protein 12 (FBL12) (Arabidopsis thaliana (Mouse-ear cress)).